We begin with the raw amino-acid sequence, 352 residues long: GTPase Obg (352 aa).

One can recognise an Obg domain in the interval 1-159; that stretch reads MSFIDEAKVF…FPIFMQLKVL (159 aa). Positions 160-327 constitute an OBG-type G domain; that stretch reads SDIGIIGMPN…VMLYEMLQKD (168 aa). GTP contacts are provided by residues 166–173, 191–195, 212–215, 279–282, and 308–310; these read GMPNAGKS, FTTLE, DIPG, NKCD, and SLD. The Mg(2+) site is built by S173 and T193.

It belongs to the TRAFAC class OBG-HflX-like GTPase superfamily. OBG GTPase family. As to quaternary structure, monomer. Mg(2+) serves as cofactor.

It localises to the cytoplasm. In terms of biological role, an essential GTPase which binds GTP, GDP and possibly (p)ppGpp with moderate affinity, with high nucleotide exchange rates and a fairly low GTP hydrolysis rate. Plays a role in control of the cell cycle, stress response, ribosome biogenesis and in those bacteria that undergo differentiation, in morphogenesis control. This is GTPase Obg from Anaplasma phagocytophilum (strain HZ).